The chain runs to 511 residues: Aminotransferase FGSG_17085 (511 aa).

Pyridoxal 5'-phosphate is bound at residue 165–166; sequence GA. Tyr-200 is a binding site for substrate. Residue Asp-310 participates in pyridoxal 5'-phosphate binding. Lys-339 is modified (N6-(pyridoxal phosphate)lysine). Gly-371 is a binding site for substrate. Position 372–373 (372–373) interacts with pyridoxal 5'-phosphate; the sequence is HT.

This sequence belongs to the class-III pyridoxal-phosphate-dependent aminotransferase family. The cofactor is pyridoxal 5'-phosphate.

The protein operates within secondary metabolite biosynthesis. In terms of biological role, aminotransferase; part of the gene cluster that mediates the biosynthesis of the lipopeptide fusaristatin A. Fusaristatin A consists of a polyketide chain linked to three amino acid residues glutamine (Gln), dehydroalanine (dehydro-Ala), and beta-aminoisobutyric acid. The biosynthesis starts with formation of a linear polyketide chain by the highly reducing polyketide synthase PKS6. The gene cluster does not contain an acyl-CoA ligase or an acyl-transferase, and it is therefore predicted that the polyketide is transferred directly to the nonribosomal peptide synthetase NRPS7. Modules 1-3 from NRPS7 incorporate dehydro-Ala, Gln, and beta-aminoisobutyric acid in the compound, which is released by cyclization. The beta-aminoisobutyric acid units are most likely not freely available to the NRPS, but can be synthesized from thymine, which requires a dehydrogenase, a monooxygenase, and an aminotransferase. The fusaristatin A cluster contains a cytochrome P450 monooxygenase (FGSG_08207) and an aminotransferase (FGSG_17085), which theoretically can perform two of the enzymatic steps. The enzymes may however also be involved in biosynthesis of dehydroalanine or modification of the polyketide. The dehydro-Ala residue can be a result of cyclization, where serine is dehydrated. The last gene of the cluster encodes a protein with an A/B barrel domain found in variable enzymes, which hampers functional prediction. This Gibberella zeae (strain ATCC MYA-4620 / CBS 123657 / FGSC 9075 / NRRL 31084 / PH-1) (Wheat head blight fungus) protein is Aminotransferase FGSG_17085.